Reading from the N-terminus, the 703-residue chain is Elongation factor G 1 (703 aa).

A tr-type G domain is found at 8–291 (ERYRNIGISA…AVIDYLPSPV (284 aa)). GTP is bound by residues 17-24 (AHIDAGKT), 88-92 (DTPGH), and 142-145 (NKMD).

It belongs to the TRAFAC class translation factor GTPase superfamily. Classic translation factor GTPase family. EF-G/EF-2 subfamily.

Its subcellular location is the cytoplasm. In terms of biological role, catalyzes the GTP-dependent ribosomal translocation step during translation elongation. During this step, the ribosome changes from the pre-translocational (PRE) to the post-translocational (POST) state as the newly formed A-site-bound peptidyl-tRNA and P-site-bound deacylated tRNA move to the P and E sites, respectively. Catalyzes the coordinated movement of the two tRNA molecules, the mRNA and conformational changes in the ribosome. The protein is Elongation factor G 1 of Burkholderia orbicola (strain AU 1054).